The following is a 473-amino-acid chain: Vasculin-like protein 1 (473 aa).

The span at 14-25 (STPQSSKSSTAT) shows a compositional bias: polar residues. A disordered region spans residues 14–55 (STPQSSKSSTATFDKHGEHLSRGEGRFGISRRRHNSSDGFFN). Residues 26–38 (FDKHGEHLSRGEG) are compositionally biased toward basic and acidic residues. A phosphoserine mark is found at Ser-49 and Ser-76. Disordered regions lie at residues 88–127 (GTTG…RKGC) and 155–189 (DFPS…AKQP). Polar residues predominate over residues 103–112 (SQRSGGSSTG). The segment covering 113–125 (NHRHWNGSFHSRK) has biased composition (basic residues). Ser-199 is subject to Phosphoserine. Disordered regions lie at residues 235-267 (LVPK…SRES) and 281-316 (LAAG…RRTT). Ser-289 is modified (phosphoserine). Low complexity predominate over residues 292-309 (ESPSSTTPPIEISSSRLT). Thr-298 carries the phosphothreonine modification. Residue Ser-381 is modified to Phosphoserine. Residues 453-473 (ECEDSDSETSSSQTSDDDAWK) form a disordered region.

This sequence belongs to the vasculin family.

It localises to the nucleus. In terms of biological role, possible transcription factor. The protein is Vasculin-like protein 1 (Gpbp1l1) of Mus musculus (Mouse).